The chain runs to 245 residues: MEDRFSTITNLHGDRKQAIFGVYVGHGGVKAAECPAKNLDKNIVEEVVGKRHELEIAEAGGSSCVTALVSEGSLVVSNAGDCRAVMSVGGVAKGSLVVPRGIGDAQLKKWVIAEPETKISRVEHDHEFLILASHGLWDKVSNQEAVDIARPFCLRTEKPLLLAACKKLVDLSASRGSFDDISVMLIPLRPVRIEKRGILEDVSSSKANSIARDIAISVTRDGRFRSYLARGGPGWLLSRIEEDKR.

In terms of domain architecture, PPM-type phosphatase spans 1-188 (MEDRFSTITN…DDISVMLIPL (188 aa)).

Belongs to the PP2C family.

The sequence is that of Putative protein phosphatase 2C-like protein 45 from Arabidopsis thaliana (Mouse-ear cress).